Here is a 343-residue protein sequence, read N- to C-terminus: Fructose-1,6-bisphosphatase class 1 (343 aa).

Mg(2+) is bound by residues Glu90, Asp109, Leu111, and Asp112. Substrate contacts are provided by residues 112 to 115 and Asn199; that span reads DGSS. Glu271 contributes to the Mg(2+) binding site.

Belongs to the FBPase class 1 family. In terms of assembly, homotetramer. Mg(2+) is required as a cofactor.

Its subcellular location is the cytoplasm. The enzyme catalyses beta-D-fructose 1,6-bisphosphate + H2O = beta-D-fructose 6-phosphate + phosphate. It participates in carbohydrate biosynthesis; Calvin cycle. This Rhodopseudomonas palustris (strain ATCC BAA-98 / CGA009) protein is Fructose-1,6-bisphosphatase class 1.